A 406-amino-acid chain; its full sequence is Renin (406 aa).

The first 23 residues, 1 to 23, serve as a signal peptide directing secretion; sequence MDGWRRMPRWGLLLLLWGSCTFG. The propeptide at 24-66 is activation peptide; sequence LPTDTTTFKRIFLKRMPSIRESLKERGVDMARLGPEWSQPMKR. N71 is a glycosylation site (N-linked (GlcNAc...) asparagine). The 318-residue stretch at 86-403 folds into the Peptidase A1 domain; that stretch reads YYGEIGIGTP…DRRNNRIGFA (318 aa). Residue D104 is part of the active site. An intrachain disulfide couples C117 to C124. N-linked (GlcNAc...) asparagine glycosylation is present at N141. C283 and C287 form a disulfide bridge. D292 is a catalytic residue. Cysteines 325 and 362 form a disulfide.

Belongs to the peptidase A1 family. As to quaternary structure, interacts with ATP6AP2.

It localises to the secreted. The protein localises to the membrane. The enzyme catalyses Cleavage of Leu-|-Xaa bond in angiotensinogen to generate angiotensin I.. With respect to regulation, interaction with ATP6AP2 results in a 5-fold increased efficiency in angiotensinogen processing. Renin is a highly specific endopeptidase, whose only known function is to generate angiotensin I from angiotensinogen in the plasma, initiating a cascade of reactions that produce an elevation of blood pressure and increased sodium retention by the kidney. The protein is Renin (REN) of Macaca mulatta (Rhesus macaque).